Consider the following 352-residue polypeptide: Protein Wnt-3a (352 aa).

An N-terminal signal peptide occupies residues 1 to 18; the sequence is MGCFGYLLLIIGLHQVLA. Disulfide bonds link cysteine 77/cysteine 88, cysteine 128/cysteine 136, cysteine 138/cysteine 155, cysteine 203/cysteine 217, cysteine 205/cysteine 212, cysteine 297/cysteine 312, cysteine 327/cysteine 342, cysteine 329/cysteine 339, and cysteine 334/cysteine 335. The N-linked (GlcNAc...) asparagine glycan is linked to asparagine 87. Serine 209 carries the O-palmitoleoyl serine lipid modification. Asparagine 298 is a glycosylation site (N-linked (GlcNAc...) asparagine).

Belongs to the Wnt family. In terms of processing, disulfide bonds have critical and distinct roles in secretion and activity. Loss of each conserved cysteine results in high molecular weight oxidized Wnt oligomers, which are formed through inter-Wnt disulfide bonding. Palmitoleoylation is required for efficient binding to frizzled receptors. Depalmitoleoylation leads to Wnt signaling pathway inhibition. In terms of tissue distribution, at neurula in anterior neural fold; at tailbud in dorsal midline of midbrain.

It is found in the secreted. The protein localises to the extracellular space. Its subcellular location is the extracellular matrix. In terms of biological role, ligand for members of the frizzled family of seven transmembrane receptors. Functions in the canonical Wnt signaling pathway that results in activation of transcription factors of the TCF/LEF family. Required for normal embryonic mesoderm development and formation of caudal somites. Required for normal morphogenesis of the developing neural tube. The sequence is that of Protein Wnt-3a (wnt3a) from Xenopus laevis (African clawed frog).